The sequence spans 722 residues: Protein HAPLESS 2-A (722 aa).

A signal peptide spans 1-24; sequence MPRRRGTPLPTILLLLAFVGGACG. Residues 25–552 lie on the Extracellular side of the membrane; sequence TEILSKSRLE…LFDFGCHIQY (528 aa). 7 cysteine pairs are disulfide-bonded: cysteine 36–cysteine 48, cysteine 129–cysteine 159, cysteine 141–cysteine 188, cysteine 160–cysteine 315, cysteine 162–cysteine 171, cysteine 298–cysteine 322, and cysteine 435–cysteine 473. The helical transmembrane segment at 553–573 threads the bilayer; that stretch reads VCIGWILLLLLIPAAVVFLWL. Residues 574 to 722 are Cytoplasmic-facing; sequence LHQEGLFDPL…HRDGHYSPSV (149 aa). Over residues 598–641 the composition is skewed to basic residues; that stretch reads RRRHQKGRHHRHHHDHRHRHGHSHGDHHHHYHGGHHQRRRHHHP. Disordered stretches follow at residues 598-665 and 680-722; these read RRRH…RNHH and RLDR…SPSV. Basic and acidic residues predominate over residues 646–662; it reads VEGHHHDRQQHSHEAGR. The segment covering 701–711 has biased composition (basic residues); that stretch reads RRSRHERHGGH. The span at 712–722 shows a compositional bias: basic and acidic residues; the sequence is GHRDGHYSPSV.

This sequence belongs to the HAP2/GCS1 family.

The protein localises to the endoplasmic reticulum membrane. Its subcellular location is the cell membrane. Its function is as follows. Required for male fertility. Plays a role in pollen tube guidance and successful gamete attachment. Essential for the fusion of gametes during double fertilization, where one male gamete fuses with the egg to produce a zygote, and another male gamete fuses with the central cell to produce the endosperm. Mediates the fusion of cell membranes. Not required for pollen tube outgrowth. This chain is Protein HAPLESS 2-A (HAP2A), found in Oryza sativa subsp. japonica (Rice).